The sequence spans 155 residues: Transcriptional repressor NrdR (155 aa).

A zinc finger lies at 3-34 (CPKCDHNGTRVLDSRPVQDHYSIRRRRECEKC). The ATP-cone domain occupies 49-139 (LIIVKKDGNR…VYRQFKDITV (91 aa)).

Belongs to the NrdR family. The cofactor is Zn(2+).

Negatively regulates transcription of bacterial ribonucleotide reductase nrd genes and operons by binding to NrdR-boxes. This is Transcriptional repressor NrdR from Exiguobacterium sp. (strain ATCC BAA-1283 / AT1b).